The following is a 187-amino-acid chain: Putative carbonic anhydrase YtiB (187 aa).

Zn(2+) contacts are provided by Cys-38, Asp-40, His-96, and Cys-99.

The protein belongs to the beta-class carbonic anhydrase family. It depends on Zn(2+) as a cofactor.

It carries out the reaction hydrogencarbonate + H(+) = CO2 + H2O. Reversible hydration of carbon dioxide. The protein is Putative carbonic anhydrase YtiB (ytiB) of Bacillus subtilis (strain 168).